A 930-amino-acid chain; its full sequence is Zn(2)-C6 fungal-type transcription factor FTF1c (930 aa).

Positions 137-164 (CIPCRRKKIRCSGEKPACEHCLRSYIPC) form a DNA-binding region, zn(2)-C6 fungal-type.

It localises to the nucleus. Its function is as follows. Zn(2)-C6 fungal-type transcription factor that has a role in the establishment of the fungus within the plant and/or the progress of the disease. Regulates the expression of virulence factors such as SIX1 and SIX6. The protein is Zn(2)-C6 fungal-type transcription factor FTF1c of Fusarium oxysporum f. sp. lycopersici (strain 4287 / CBS 123668 / FGSC 9935 / NRRL 34936) (Fusarium vascular wilt of tomato).